Consider the following 311-residue polypeptide: MACAAVMIPGLLRCSVGAICTEAASLRLTLSTLRHLTLTSIMKSKRKTDHMERTASVLRREIVSAAKVCGAASESPSVKSLRLLVADQDFSFKAGQWVDFFIPGVSVVGGFSICSSPRLLEQERVIELAVKYTNHPPALWVHNTCTLDSEVAVRVGGEFFFDPQPADASRNLVLIAGGVGINPLLSILRHAADLLREQANKRNGYEIGTIKLFYSAKSTSELLFKKNILDLVNEFPEKIACSSHVTKQTTQINAELKPYITGRITEKEIRDHISKETLFYICGPPPMTDFFSKQLENNHVPKEHICFEKWW.

The first 17 residues, 1 to 17 (MACAAVMIPGLLRCSVG), serve as a signal peptide directing secretion. One can recognise an FAD-binding FR-type domain in the interval 50-186 (HMERTASVLR…GGVGINPLLS (137 aa)). Position 178–183 (178–183 (GVGINP)) interacts with NAD(+).

The polypeptide is Oxidoreductase NAD-binding domain-containing protein 1 (OXNAD1) (Pongo abelii (Sumatran orangutan)).